A 417-amino-acid chain; its full sequence is Serine hydroxymethyltransferase (417 aa).

(6S)-5,6,7,8-tetrahydrofolate-binding positions include L112 and 116-118 (GHL). At K221 the chain carries N6-(pyridoxal phosphate)lysine. E247 serves as a coordination point for (6S)-5,6,7,8-tetrahydrofolate.

Belongs to the SHMT family. As to quaternary structure, homodimer. It depends on pyridoxal 5'-phosphate as a cofactor.

The protein localises to the cytoplasm. The catalysed reaction is (6R)-5,10-methylene-5,6,7,8-tetrahydrofolate + glycine + H2O = (6S)-5,6,7,8-tetrahydrofolate + L-serine. It participates in one-carbon metabolism; tetrahydrofolate interconversion. Its pathway is amino-acid biosynthesis; glycine biosynthesis; glycine from L-serine: step 1/1. Its function is as follows. Catalyzes the reversible interconversion of serine and glycine with tetrahydrofolate (THF) serving as the one-carbon carrier. This reaction serves as the major source of one-carbon groups required for the biosynthesis of purines, thymidylate, methionine, and other important biomolecules. Also exhibits THF-independent aldolase activity toward beta-hydroxyamino acids, producing glycine and aldehydes, via a retro-aldol mechanism. The sequence is that of Serine hydroxymethyltransferase from Borrelia garinii subsp. bavariensis (strain ATCC BAA-2496 / DSM 23469 / PBi) (Borreliella bavariensis).